A 299-amino-acid chain; its full sequence is Zinc finger protein-like 1 homolog (299 aa).

The B box-type; degenerate zinc finger occupies 1–43 (MGLCKCPKRLVTNQFCFEHRVNVCEHCMVQSHPKCIVQSYLQW). The segment at 53 to 101 (CTLCGTTLEQGDCVRLVCYHVFHWDCLNARQAALPANTAPRGHQCPACS) adopts an RING-type; atypical zinc-finger fold. Residues 200–231 (AGDYASSRRPLLPRQSPIGGTDRDDNKYQRRT) form a disordered region. A Phosphoserine modification is found at S215. A helical membrane pass occupies residues 256–276 (WFLVTAGILAFVLFVYLMAWL).

It belongs to the ZFPL1 family.

It is found in the membrane. In Drosophila melanogaster (Fruit fly), this protein is Zinc finger protein-like 1 homolog.